Reading from the N-terminus, the 86-residue chain is Insulin (86 aa).

Cystine bridges form between C7–C72, C19–C85, and C71–C76. Residues 33-63 (ELEDPQVGQADPGVVPEAGRLQPLALEMTLQ) constitute a propeptide, c peptide.

Belongs to the insulin family. As to quaternary structure, heterodimer of a B chain and an A chain linked by two disulfide bonds.

Its subcellular location is the secreted. Insulin decreases blood glucose concentration. It increases cell permeability to monosaccharides, amino acids and fatty acids. It accelerates glycolysis, the pentose phosphate cycle, and glycogen synthesis in liver. The polypeptide is Insulin (INS) (Chinchilla chinchilla (Short-tailed chinchilla)).